The chain runs to 84 residues: MFTLKKPLLLIVLLGIISLSLCEQERAADEDEGTKIKRRIFSKIGGKAIKNLILKGIKNIGKEVGMDVIRTGIDVAGCKIKGEC.

An N-terminal signal peptide occupies residues 1 to 22 (MFTLKKPLLLIVLLGIISLSLC). Residues 23–36 (EQERAADEDEGTKI) constitute a propeptide, removed in mature form. A disulfide bridge connects residues Cys-78 and Cys-84.

As to expression, expressed by the skin glands.

It is found in the secreted. In terms of biological role, has antimicrobial activity against Gram-negative bacterium E.coli ATCC 8739 (MIC=3.1 ug), against Gram positive bacteria S.aureus ATCC 6538 (MIC=3.1 ug), methicillin-resistant S.aureus ATCC 43300 (MIC=12.5 ug), B.subtilis ATCC 6633 (MIC=12.5 ug) and against fungus C.albicans ATCC 90028 (MIC=50 ug). The chain is Esculentin-1ISb from Odorrana ishikawae (Ishikawa's frog).